The chain runs to 166 residues: Large ribosomal subunit protein uL10 (166 aa).

This sequence belongs to the universal ribosomal protein uL10 family. Part of the ribosomal stalk of the 50S ribosomal subunit. The N-terminus interacts with L11 and the large rRNA to form the base of the stalk. The C-terminus forms an elongated spine to which L12 dimers bind in a sequential fashion forming a multimeric L10(L12)X complex.

Forms part of the ribosomal stalk, playing a central role in the interaction of the ribosome with GTP-bound translation factors. This chain is Large ribosomal subunit protein uL10, found in Mesoplasma florum (strain ATCC 33453 / NBRC 100688 / NCTC 11704 / L1) (Acholeplasma florum).